The primary structure comprises 192 residues: Crossover junction endodeoxyribonuclease RuvC (192 aa).

Active-site residues include Asp8, Glu67, and Asp139. Asp8, Glu67, and Asp139 together coordinate Mg(2+).

The protein belongs to the RuvC family. Homodimer which binds Holliday junction (HJ) DNA. The HJ becomes 2-fold symmetrical on binding to RuvC with unstacked arms; it has a different conformation from HJ DNA in complex with RuvA. In the full resolvosome a probable DNA-RuvA(4)-RuvB(12)-RuvC(2) complex forms which resolves the HJ. Mg(2+) is required as a cofactor.

It localises to the cytoplasm. It carries out the reaction Endonucleolytic cleavage at a junction such as a reciprocal single-stranded crossover between two homologous DNA duplexes (Holliday junction).. In terms of biological role, the RuvA-RuvB-RuvC complex processes Holliday junction (HJ) DNA during genetic recombination and DNA repair. Endonuclease that resolves HJ intermediates. Cleaves cruciform DNA by making single-stranded nicks across the HJ at symmetrical positions within the homologous arms, yielding a 5'-phosphate and a 3'-hydroxyl group; requires a central core of homology in the junction. The consensus cleavage sequence is 5'-(A/T)TT(C/G)-3'. Cleavage occurs on the 3'-side of the TT dinucleotide at the point of strand exchange. HJ branch migration catalyzed by RuvA-RuvB allows RuvC to scan DNA until it finds its consensus sequence, where it cleaves and resolves the cruciform DNA. In Actinobacillus pleuropneumoniae serotype 5b (strain L20), this protein is Crossover junction endodeoxyribonuclease RuvC.